The following is a 447-amino-acid chain: FAD-dependent monooxygenase tropB (447 aa).

The chain crosses the membrane as a helical span at residues 12 to 32; it reads PLSVGIVGGGIIGVILAAGLV. 3 residues coordinate FAD: Glu-42, Ala-55, and Arg-124. Asn-153 is a glycosylation site (N-linked (GlcNAc...) asparagine). Active-site residues include Arg-206 and Tyr-239. Asn-243 carries N-linked (GlcNAc...) asparagine glycosylation. 2 residues coordinate FAD: Asp-322 and Ala-335.

This sequence belongs to the paxM FAD-dependent monooxygenase family. It depends on FAD as a cofactor.

It is found in the membrane. It functions in the pathway secondary metabolite biosynthesis. FAD-dependent monooxygenase; part of the gene cluster that mediates the biosynthesis of the tropolone class of fungal maleic anhydrides. Within the pathway, tropB catalyzes a synthetically challenging asymmetric oxidative dearomatization reaction to convert 3-methylorcinaldehyde into a hydroxycyclohexadione. The pathway begins with the synthesis of 3-methylorcinaldehyde by the non-reducing polyketide synthase (PKS) tropA. 3-methylorcinaldehyde is the substrate for the FAD-dependent monooxygenase tropB to yield a dearomatized hydroxycyclohexadione. The 2-oxoglutarate-dependent dioxygenase tropC then performs the oxidative ring expansion to provide the first tropolone metabolite stipitaldehyde. Trop D converts stipitaldehyde into stipitacetal which is in turn converted to stipitalide by the short-chain dehydrogenase/reductase tropE. The next steps involve tropF, tropG, tropH, tropI and tropJ to form successive tropolone maleic anhydrides including stipitaldehydic, stipitatonic and stipitatic acids. This Talaromyces stipitatus (strain ATCC 10500 / CBS 375.48 / QM 6759 / NRRL 1006) (Penicillium stipitatum) protein is FAD-dependent monooxygenase tropB.